The following is a 518-amino-acid chain: Zinc finger protein 449 (518 aa).

An SCAN box domain is found at 30 to 112; it reads RQRFRQFQYR…SLIEDLQREL (83 aa). Residues 292-304 are compositionally biased toward polar residues; the sequence is NPTLGETPENSNL. A disordered region spans residues 292 to 325; that stretch reads NPTLGETPENSNLEEPLNPKPHKKKSPGEKPHRC. 7 C2H2-type zinc fingers span residues 323–345, 351–373, 379–401, 407–429, 435–457, 463–485, and 491–513; these read HRCP…QRIH, HKCP…QRLH, YECT…QRTH, YKCL…LKTH, HRCH…QRTH, FKCN…LRIH, and YKCT…QVTH.

It belongs to the krueppel C2H2-type zinc-finger protein family.

The protein localises to the nucleus. May be involved in transcriptional regulation. The chain is Zinc finger protein 449 (ZNF449) from Pan troglodytes (Chimpanzee).